The sequence spans 390 residues: Tuftelin (390 aa).

Coiled coils occupy residues 88 to 126 (DKMIHEKNINQLKSEVQYIQEARNCLQKLREDISSKLDR) and 162 to 351 (DTHI…IEKQ). Ser-171 carries the post-translational modification Phosphoserine.

The protein belongs to the tuftelin family. In terms of assembly, interacts with TFIP11. Present in the extracellular enamel and is mainly associated with the crystal component.

The protein resides in the secreted. Involved in the structural organization of the epidermis. Involved in the mineralization and structural organization of enamel. This is Tuftelin (TUFT1) from Bos taurus (Bovine).